The sequence spans 481 residues: G-protein coupled receptor 37-like 1 (481 aa).

The first 25 residues, 1–25, serve as a signal peptide directing secretion; it reads MRWLWPLAVSLAVILAVGLSRVSGG. Disordered stretches follow at residues 26–58 and 70–108; these read APLHLGRHRAETQEQQSRSKRGTEDEEAKGVQQ and PIHPAGLQPTKPLVATSPNPGKDGGTPDSGQELRGNLTG. Residues 26–134 are Extracellular-facing; sequence APLHLGRHRA…ESSYSAYAIM (109 aa). T79 and T85 each carry an O-linked (GalNAc...) threonine glycan. S86 carries an O-linked (GalNAc...) serine glycan. Residue T95 is glycosylated (O-linked (GalNAc...) threonine). N105 carries N-linked (GlcNAc...) asparagine glycosylation. T107 carries an O-linked (GalNAc...) threonine glycan. Residues 135–155 traverse the membrane as a helical segment; the sequence is LLALVVFAVGIVGNLSVMCIV. Residues 156–167 are Cytoplasmic-facing; it reads WHSYYLKSAWNS. A helical transmembrane segment spans residues 168–188; that stretch reads ILASLALWDFLVLFFCLPIVI. The Extracellular segment spans residues 189 to 205; that stretch reads FNEITKQRLLGDVSCRA. Residues C203 and C286 are joined by a disulfide bond. Residues 206–226 traverse the membrane as a helical segment; the sequence is VPFMEVSSLGVTTFSLCALGI. Residues 227–251 are Cytoplasmic-facing; it reads DRFHVATSTLPKVRPIERCQSILAK. Residues 252 to 272 form a helical membrane-spanning segment; sequence LAVIWVGSMTLAVPELLLWQL. Over 273-310 the chain is Extracellular; it reads AQEPAPTMGTLDSCIMKPSASLPESLYSLVMTYQNARM. Residues 311-331 traverse the membrane as a helical segment; the sequence is WWYFGCYFCLPILFTVTCQLV. Over 332 to 361 the chain is Cytoplasmic; the sequence is TWRVRGPPGRKSECRASKHEQCESQLNSTV. A helical transmembrane segment spans residues 362 to 382; the sequence is VGLTVVYAFCTLPENVCNIVV. Over 383-398 the chain is Extracellular; the sequence is AYLSTELTRQTLDLLG. The helical transmembrane segment at 399–419 threads the bilayer; that stretch reads LINQFSTFFKGAITPVLLLCI. Residues 420-481 lie on the Cytoplasmic side of the membrane; the sequence is CRPLGQAFLD…PPLLPLGTPC (62 aa). S471 carries the phosphoserine modification. At T479 the chain carries Phosphothreonine.

This sequence belongs to the G-protein coupled receptor 1 family. Interacts with the PTCH1 receptor. In terms of processing, O-glycosylated. Undergoes metalloprotease-mediated cleavage which reduces its constitutive activity. Post-translationally, ubiquitinated. In terms of tissue distribution, expressed in primary cortical astrocytes (at protein level). Expressed in the central nervous system.

The protein resides in the cell membrane. The protein localises to the cell projection. It localises to the cilium membrane. In terms of biological role, G-protein coupled receptor. Has been shown to bind the neuroprotective and glioprotective factor prosaposin (PSAP), leading to endocytosis followed by an ERK phosphorylation cascade. However, other studies have shown that prosaposin does not increase activity. It has been suggested that GPR37L1 is a constitutively active receptor which signals through the guanine nucleotide-binding protein G(s) subunit alpha. Participates in the regulation of postnatal cerebellar development by modulating the Shh pathway. Regulates baseline blood pressure in females and protects against cardiovascular stress in males. Mediates inhibition of astrocyte glutamate transporters and reduction in neuronal N-methyl-D-aspartate receptor activity. This chain is G-protein coupled receptor 37-like 1 (GPR37L1), found in Homo sapiens (Human).